The following is a 64-amino-acid chain: MAGHKVAHATLKGPSVVKELIIGLTLGLAAGGLWKMHHWNEQRKTRTFYDLLERGEIGVVASEE.

A helical transmembrane segment spans residues 15–34; the sequence is SVVKELIIGLTLGLAAGGLW.

It belongs to the cytochrome c oxidase subunit 5C family.

It localises to the mitochondrion inner membrane. Its function is as follows. This protein is one of the nuclear-coded polypeptide chains of cytochrome c oxidase, the terminal oxidase in mitochondrial electron transport. The sequence is that of Cytochrome c oxidase subunit 5C-2 from Arabidopsis thaliana (Mouse-ear cress).